The primary structure comprises 66 residues: COP-associated protein (66 aa).

Residues 1–66 form the HMA domain; the sequence is MKVTFQVPSI…ALLDAGQEVV (66 aa). The Cu cation site is built by Cys-12 and Cys-15.

Its function is as follows. Part of a cation-transporting system which is associated with copper export out of the H.pylori cells. The protein is COP-associated protein (copP) of Helicobacter pylori (strain J99 / ATCC 700824) (Campylobacter pylori J99).